We begin with the raw amino-acid sequence, 159 residues long: SsrA-binding protein (159 aa).

A disordered region spans residues 138–159; it reads KRDTLKDKDWQRQKERMMKHSV.

Belongs to the SmpB family.

The protein resides in the cytoplasm. Functionally, required for rescue of stalled ribosomes mediated by trans-translation. Binds to transfer-messenger RNA (tmRNA), required for stable association of tmRNA with ribosomes. tmRNA and SmpB together mimic tRNA shape, replacing the anticodon stem-loop with SmpB. tmRNA is encoded by the ssrA gene; the 2 termini fold to resemble tRNA(Ala) and it encodes a 'tag peptide', a short internal open reading frame. During trans-translation Ala-aminoacylated tmRNA acts like a tRNA, entering the A-site of stalled ribosomes, displacing the stalled mRNA. The ribosome then switches to translate the ORF on the tmRNA; the nascent peptide is terminated with the 'tag peptide' encoded by the tmRNA and targeted for degradation. The ribosome is freed to recommence translation, which seems to be the essential function of trans-translation. In Alteromonas mediterranea (strain DSM 17117 / CIP 110805 / LMG 28347 / Deep ecotype), this protein is SsrA-binding protein.